A 247-amino-acid polypeptide reads, in one-letter code: Cell division protein ZapD (247 aa).

Belongs to the ZapD family. In terms of assembly, interacts with FtsZ.

It localises to the cytoplasm. Cell division factor that enhances FtsZ-ring assembly. Directly interacts with FtsZ and promotes bundling of FtsZ protofilaments, with a reduction in FtsZ GTPase activity. The chain is Cell division protein ZapD from Salmonella dublin (strain CT_02021853).